Reading from the N-terminus, the 583-residue chain is Pre-mRNA-processing protein 45 (583 aa).

4 disordered regions span residues 1 to 68, 177 to 253, 321 to 424, and 519 to 583; these read MTSI…APED, KPKN…LTAE, MQQR…EQNR, and RGAA…DEEN. Positions 203–225 are enriched in basic and acidic residues; the sequence is TSRKNDRIMKIVERQQDPMEPPK. Residues 233–244 show a composition bias toward pro residues; the sequence is RGPPSPPPPIMH. The span at 325-350 shows a compositional bias: basic and acidic residues; the sequence is LAEKEKAQKEEHLRALAQKAREERSR. Positions 367–377 are enriched in low complexity; it reads RSYSDASSRSR. Basic and acidic residues-rich tracts occupy residues 386–424, 519–538, and 569–583; these read ARERERIRRERRQDAERQLRQSRMGTERRIQAMAREQNR, RGAADAEERSGPVQFEKDTA, and PDSRGSKRARVDEEN.

It belongs to the SNW family. In terms of assembly, associated with the spliceosome.

It is found in the nucleus. Its function is as follows. Involved in pre-mRNA splicing. The polypeptide is Pre-mRNA-processing protein 45 (prp45) (Emericella nidulans (strain FGSC A4 / ATCC 38163 / CBS 112.46 / NRRL 194 / M139) (Aspergillus nidulans)).